The chain runs to 350 residues: Holliday junction branch migration complex subunit RuvB (350 aa).

Residues 1–182 are large ATPase domain (RuvB-L); it reads MEDRIVTPLN…FGVLCPMDFY (182 aa). ATP is bound by residues L21, R22, G63, K66, T67, T68, 129 to 131, R172, Y182, and R219; that span reads EDY. Residue T67 participates in Mg(2+) binding. Positions 183–253 are small ATPAse domain (RuvB-S); it reads DQEELSEIVV…TSKAALELLE (71 aa). The segment at 256–350 is head domain (RuvB-H); the sequence is KEGFDSIDNK…KQSSLFDGEV (95 aa). Residues R311 and R316 each coordinate DNA.

It belongs to the RuvB family. Homohexamer. Forms an RuvA(8)-RuvB(12)-Holliday junction (HJ) complex. HJ DNA is sandwiched between 2 RuvA tetramers; dsDNA enters through RuvA and exits via RuvB. An RuvB hexamer assembles on each DNA strand where it exits the tetramer. Each RuvB hexamer is contacted by two RuvA subunits (via domain III) on 2 adjacent RuvB subunits; this complex drives branch migration. In the full resolvosome a probable DNA-RuvA(4)-RuvB(12)-RuvC(2) complex forms which resolves the HJ.

Its subcellular location is the cytoplasm. It carries out the reaction ATP + H2O = ADP + phosphate + H(+). Its function is as follows. The RuvA-RuvB-RuvC complex processes Holliday junction (HJ) DNA during genetic recombination and DNA repair, while the RuvA-RuvB complex plays an important role in the rescue of blocked DNA replication forks via replication fork reversal (RFR). RuvA specifically binds to HJ cruciform DNA, conferring on it an open structure. The RuvB hexamer acts as an ATP-dependent pump, pulling dsDNA into and through the RuvAB complex. RuvB forms 2 homohexamers on either side of HJ DNA bound by 1 or 2 RuvA tetramers; 4 subunits per hexamer contact DNA at a time. Coordinated motions by a converter formed by DNA-disengaged RuvB subunits stimulates ATP hydrolysis and nucleotide exchange. Immobilization of the converter enables RuvB to convert the ATP-contained energy into a lever motion, pulling 2 nucleotides of DNA out of the RuvA tetramer per ATP hydrolyzed, thus driving DNA branch migration. The RuvB motors rotate together with the DNA substrate, which together with the progressing nucleotide cycle form the mechanistic basis for DNA recombination by continuous HJ branch migration. Branch migration allows RuvC to scan DNA until it finds its consensus sequence, where it cleaves and resolves cruciform DNA. The protein is Holliday junction branch migration complex subunit RuvB of Clostridium kluyveri (strain NBRC 12016).